The sequence spans 40 residues: Photosystem II reaction center protein J (40 aa).

The helical transmembrane segment at 8–28 (IPLWLIGTVTGTLVIGLIGIF) threads the bilayer.

The protein belongs to the PsbJ family. In terms of assembly, PSII is composed of 1 copy each of membrane proteins PsbA, PsbB, PsbC, PsbD, PsbE, PsbF, PsbH, PsbI, PsbJ, PsbK, PsbL, PsbM, PsbT, PsbX, PsbY, PsbZ, Psb30/Ycf12, at least 3 peripheral proteins of the oxygen-evolving complex and a large number of cofactors. It forms dimeric complexes.

The protein localises to the plastid. The protein resides in the chloroplast thylakoid membrane. In terms of biological role, one of the components of the core complex of photosystem II (PSII). PSII is a light-driven water:plastoquinone oxidoreductase that uses light energy to abstract electrons from H(2)O, generating O(2) and a proton gradient subsequently used for ATP formation. It consists of a core antenna complex that captures photons, and an electron transfer chain that converts photonic excitation into a charge separation. The protein is Photosystem II reaction center protein J of Cycas taitungensis (Prince sago).